The primary structure comprises 1399 residues: DNA-directed RNA polymerase subunit beta' (1399 aa).

4 residues coordinate Zn(2+): cysteine 71, cysteine 73, cysteine 86, and cysteine 89. Positions 462, 464, and 466 each coordinate Mg(2+). Residues cysteine 810, cysteine 884, cysteine 891, and cysteine 894 each coordinate Zn(2+). A disordered region spans residues 1379 to 1399 (KQAAIVPSQPEPQPLALPPAE). Pro residues predominate over residues 1387 to 1399 (QPEPQPLALPPAE).

The protein belongs to the RNA polymerase beta' chain family. As to quaternary structure, the RNAP catalytic core consists of 2 alpha, 1 beta, 1 beta' and 1 omega subunit. When a sigma factor is associated with the core the holoenzyme is formed, which can initiate transcription. The cofactor is Mg(2+). It depends on Zn(2+) as a cofactor.

The catalysed reaction is RNA(n) + a ribonucleoside 5'-triphosphate = RNA(n+1) + diphosphate. Its function is as follows. DNA-dependent RNA polymerase catalyzes the transcription of DNA into RNA using the four ribonucleoside triphosphates as substrates. The protein is DNA-directed RNA polymerase subunit beta' of Bradyrhizobium sp. (strain BTAi1 / ATCC BAA-1182).